We begin with the raw amino-acid sequence, 433 residues long: Serine--tRNA ligase (433 aa).

235 to 237 (TSE) is an L-serine binding site. 266–268 (RSE) contacts ATP. Glu289 is a binding site for L-serine. 353–356 (EISS) lines the ATP pocket. Ser388 is an L-serine binding site.

The protein belongs to the class-II aminoacyl-tRNA synthetase family. Type-1 seryl-tRNA synthetase subfamily. Homodimer. The tRNA molecule binds across the dimer.

The protein resides in the cytoplasm. It catalyses the reaction tRNA(Ser) + L-serine + ATP = L-seryl-tRNA(Ser) + AMP + diphosphate + H(+). The catalysed reaction is tRNA(Sec) + L-serine + ATP = L-seryl-tRNA(Sec) + AMP + diphosphate + H(+). It participates in aminoacyl-tRNA biosynthesis; selenocysteinyl-tRNA(Sec) biosynthesis; L-seryl-tRNA(Sec) from L-serine and tRNA(Sec): step 1/1. Functionally, catalyzes the attachment of serine to tRNA(Ser). Is also able to aminoacylate tRNA(Sec) with serine, to form the misacylated tRNA L-seryl-tRNA(Sec), which will be further converted into selenocysteinyl-tRNA(Sec). This Burkholderia pseudomallei (strain 668) protein is Serine--tRNA ligase.